Reading from the N-terminus, the 88-residue chain is Long neurotoxin LNTX-1 (88 aa).

An N-terminal signal peptide occupies residues 1-21 (MKTLLLTLVVVTIVCLDFGYA). 5 disulfides stabilise this stretch: cysteine 24-cysteine 42, cysteine 35-cysteine 63, cysteine 48-cysteine 52, cysteine 67-cysteine 78, and cysteine 79-cysteine 84.

This sequence belongs to the three-finger toxin family. Long-chain subfamily. Type II alpha-neurotoxin sub-subfamily. In terms of tissue distribution, expressed by the venom gland.

The protein localises to the secreted. Its function is as follows. Binds with high affinity to muscular (alpha-1/CHRNA1) and neuronal (alpha-7/CHRNA7) nicotinic acetylcholine receptor (nAChR) and inhibits acetylcholine from binding to the receptor, thereby impairing neuromuscular and neuronal transmission. The polypeptide is Long neurotoxin LNTX-1 (Demansia vestigiata (Lesser black whip snake)).